Consider the following 142-residue polypeptide: Large ribosomal subunit protein uL13 (142 aa).

Belongs to the universal ribosomal protein uL13 family. As to quaternary structure, part of the 50S ribosomal subunit.

In terms of biological role, this protein is one of the early assembly proteins of the 50S ribosomal subunit, although it is not seen to bind rRNA by itself. It is important during the early stages of 50S assembly. The polypeptide is Large ribosomal subunit protein uL13 (Aeromonas hydrophila subsp. hydrophila (strain ATCC 7966 / DSM 30187 / BCRC 13018 / CCUG 14551 / JCM 1027 / KCTC 2358 / NCIMB 9240 / NCTC 8049)).